A 131-amino-acid chain; its full sequence is Lysosomal enzyme trafficking factor (131 aa).

The next 2 membrane-spanning stretches (helical) occupy residues methionine 8–phenylalanine 28 and leucine 66–leucine 86.

Belongs to the LYSET family.

Its subcellular location is the golgi apparatus membrane. In terms of biological role, required for mannose-6-phosphate-dependent trafficking of lysosomal enzymes. LYSET bridges GlcNAc-1-phosphate transferase (GNPTAB), to the membrane-bound transcription factor site-1 protease (MBTPS1), thus allowing proteolytic activation of the GNPTAB. GNPTAB is involved in the regulation of M6P-dependent Golgi-to-lysosome trafficking of lysosomal enzymes. LYSET is thus an essential factor for maturation and delivery of lysosomal hydrolases. The chain is Lysosomal enzyme trafficking factor (lyset-a) from Xenopus laevis (African clawed frog).